Consider the following 146-residue polypeptide: Hemoglobin subunit beta-1/2 (146 aa).

Positions 2–146 (EWTDKERSII…VVSALGKQYH (145 aa)) constitute a Globin domain. Heme b contacts are provided by His-63 and His-92.

The protein belongs to the globin family. As to quaternary structure, hb1 is a heterotetramer of two alpha-1 chains and two beta chains. Hb2 is a heterotetramer of two alpha-2 chains and two beta chains. In terms of tissue distribution, red blood cells.

In terms of biological role, involved in oxygen transport from gills to the various peripheral tissues. The protein is Hemoglobin subunit beta-1/2 of Trematomus newnesi (Dusky notothen).